We begin with the raw amino-acid sequence, 314 residues long: Homeobox protein DBX1-A (314 aa).

The homeobox DNA-binding region spans 175-234; sequence GMLRRAVFSDVQRKALEKMFQKQKYISKPDRKKLAAKLGLKDSQVKIWFQNRRMKWRNSK. Disordered regions lie at residues 234–279 and 292–314; these read KERE…CAPS and STDS…ITVS. The segment covering 258-267 has biased composition (basic and acidic residues); that stretch reads DLSDVGKKSS. Over residues 305 to 314 the composition is skewed to acidic residues; the sequence is SESEDEITVS.

Belongs to the H2.0 homeobox family.

It localises to the nucleus. The sequence is that of Homeobox protein DBX1-A (dbx1a) from Danio rerio (Zebrafish).